Reading from the N-terminus, the 359-residue chain is Phospho-N-acetylmuramoyl-pentapeptide-transferase (359 aa).

10 consecutive transmembrane segments (helical) span residues 27–47 (IGAA…FIRT), 71–91 (VPTM…LLWA), 93–113 (LDNP…MIGA), 134–154 (LLLQ…HPGY), 170–190 (LGWF…NAVN), 203–223 (MVVS…VVLA), 234–254 (SGEL…FLWF), 262–282 (FMGD…AIII), 286–306 (FLLA…MLQV), and 336–356 (KVVV…IATL).

The protein belongs to the glycosyltransferase 4 family. MraY subfamily. Mg(2+) is required as a cofactor.

It localises to the cell inner membrane. The catalysed reaction is UDP-N-acetyl-alpha-D-muramoyl-L-alanyl-gamma-D-glutamyl-meso-2,6-diaminopimeloyl-D-alanyl-D-alanine + di-trans,octa-cis-undecaprenyl phosphate = di-trans,octa-cis-undecaprenyl diphospho-N-acetyl-alpha-D-muramoyl-L-alanyl-D-glutamyl-meso-2,6-diaminopimeloyl-D-alanyl-D-alanine + UMP. Its pathway is cell wall biogenesis; peptidoglycan biosynthesis. Functionally, catalyzes the initial step of the lipid cycle reactions in the biosynthesis of the cell wall peptidoglycan: transfers peptidoglycan precursor phospho-MurNAc-pentapeptide from UDP-MurNAc-pentapeptide onto the lipid carrier undecaprenyl phosphate, yielding undecaprenyl-pyrophosphoryl-MurNAc-pentapeptide, known as lipid I. The protein is Phospho-N-acetylmuramoyl-pentapeptide-transferase of Desulfotalea psychrophila (strain LSv54 / DSM 12343).